We begin with the raw amino-acid sequence, 643 residues long: 1-deoxy-D-xylulose-5-phosphate synthase (643 aa).

Thiamine diphosphate is bound by residues His-78 and 119-121; that span reads AHS. Asp-150 serves as a coordination point for Mg(2+). Residues 151–152, Asn-179, Tyr-288, and Glu-370 each bind thiamine diphosphate; that span reads GS. Position 179 (Asn-179) interacts with Mg(2+).

It belongs to the transketolase family. DXPS subfamily. As to quaternary structure, homodimer. The cofactor is Mg(2+). Thiamine diphosphate is required as a cofactor.

It catalyses the reaction D-glyceraldehyde 3-phosphate + pyruvate + H(+) = 1-deoxy-D-xylulose 5-phosphate + CO2. Its pathway is metabolic intermediate biosynthesis; 1-deoxy-D-xylulose 5-phosphate biosynthesis; 1-deoxy-D-xylulose 5-phosphate from D-glyceraldehyde 3-phosphate and pyruvate: step 1/1. Catalyzes the acyloin condensation reaction between C atoms 2 and 3 of pyruvate and glyceraldehyde 3-phosphate to yield 1-deoxy-D-xylulose-5-phosphate (DXP). This is 1-deoxy-D-xylulose-5-phosphate synthase from Brucella suis (strain ATCC 23445 / NCTC 10510).